The following is a 231-amino-acid chain: NKG2-C type II integral membrane protein (231 aa).

A compositionally biased stretch (polar residues) spans 1–12; the sequence is MNKQRGTFSEVS. Positions 1–31 are disordered; sequence MNKQRGTFSEVSLAQDPKRQQRKPKDNKSSI. Residues 1–70 lie on the Cytoplasmic side of the membrane; it reads MNKQRGTFSE…CQGLLPPPEK (70 aa). Residues 16–28 show a composition bias toward basic and acidic residues; that stretch reads DPKRQQRKPKDNK. Residues 71–93 traverse the membrane as a helical; Signal-anchor for type II membrane protein segment; sequence LTAEVLGIICIVLMATVLKTVVL. The Extracellular segment spans residues 94 to 231; sequence IPFLEQNNSF…SKRYYCKHKL (138 aa). N100 carries N-linked (GlcNAc...) asparagine glycosylation. The C-type lectin domain occupies 116–229; the sequence is HCPEEWITYS…GSSKRYYCKH (114 aa). 3 disulfide bridges follow: C117/C128, C145/C227, and C206/C219. N149 carries N-linked (GlcNAc...) asparagine glycosylation.

As to quaternary structure, heterodimer with KLRD1; disulfide-linked. KLRD1-KLRC2 receptor complex interacts with TYROBP/DAP12 homodimer; this interaction is necessary for the expression on the cell surface. In terms of tissue distribution, natural killer cells.

The protein localises to the cell membrane. Functionally, immune activating receptor involved in self-nonself discrimination. In complex with KLRD1 on cytotoxic lymphocyte subsets, recognizes non-classical major histocompatibility MHC-E loaded with signal sequence-derived peptides from non-classical MHC-G molecules, likely playing a role in the generation and effector functions of adaptive natural killer (NK) cells and in maternal-fetal tolerance during pregnancy. Regulates the effector functions of terminally differentiated cytotoxic lymphocyte subsets, and in particular may play a role in adaptive NK cell response to viral infection. Upon MHC-E-peptide binding, transmits intracellular signals via the adapter protein TYROBP/DAP12, triggering the phosphorylation of proximal signaling molecules and cell activation. In Macaca mulatta (Rhesus macaque), this protein is NKG2-C type II integral membrane protein (KLRC2).